The sequence spans 132 residues: Fatty acid-binding protein, intestinal (132 aa).

An N-acetylalanine modification is found at alanine 2. Hexadecanoate contacts are provided by tryptophan 83 and arginine 107. Tryptophan 83 and arginine 107 together coordinate tetradecanoate.

Belongs to the calycin superfamily. Fatty-acid binding protein (FABP) family.

The protein localises to the cytoplasm. Its function is as follows. FABPs are thought to play a role in the intracellular transport of long-chain fatty acids and their acyl-CoA esters. This Xenopus laevis (African clawed frog) protein is Fatty acid-binding protein, intestinal (fabp2).